Reading from the N-terminus, the 464-residue chain is Argininosuccinate lyase (464 aa).

This sequence belongs to the lyase 1 family. Argininosuccinate lyase subfamily.

It is found in the cytoplasm. It catalyses the reaction 2-(N(omega)-L-arginino)succinate = fumarate + L-arginine. It participates in amino-acid biosynthesis; L-arginine biosynthesis; L-arginine from L-ornithine and carbamoyl phosphate: step 3/3. The polypeptide is Argininosuccinate lyase (Pseudomonas syringae pv. tomato (strain ATCC BAA-871 / DC3000)).